Reading from the N-terminus, the 531-residue chain is tRNA-2-methylthio-N(6)-dimethylallyladenosine synthase (531 aa).

A disordered region spans residues 1 to 26; the sequence is MNEKQRLEQTGQIKTESHPADRKSAL. Positions 15–26 are enriched in basic and acidic residues; sequence TESHPADRKSAL. An MTTase N-terminal domain is found at 80 to 198; sequence RKFYIRTYGC…LPYILHEAYM (119 aa). [4Fe-4S] cluster is bound by residues cysteine 89, cysteine 125, cysteine 159, cysteine 235, cysteine 239, and cysteine 242. One can recognise a Radical SAM core domain in the interval 221–451; that stretch reads RKGKIKAWVN…NDLVQEIAAK (231 aa). Residues 454 to 517 enclose the TRAM domain; it reads KQYEGQVVEV…TWTLTGELVN (64 aa).

Belongs to the methylthiotransferase family. MiaB subfamily. As to quaternary structure, monomer. [4Fe-4S] cluster serves as cofactor.

It localises to the cytoplasm. It carries out the reaction N(6)-dimethylallyladenosine(37) in tRNA + (sulfur carrier)-SH + AH2 + 2 S-adenosyl-L-methionine = 2-methylsulfanyl-N(6)-dimethylallyladenosine(37) in tRNA + (sulfur carrier)-H + 5'-deoxyadenosine + L-methionine + A + S-adenosyl-L-homocysteine + 2 H(+). Functionally, catalyzes the methylthiolation of N6-(dimethylallyl)adenosine (i(6)A), leading to the formation of 2-methylthio-N6-(dimethylallyl)adenosine (ms(2)i(6)A) at position 37 in tRNAs that read codons beginning with uridine. The sequence is that of tRNA-2-methylthio-N(6)-dimethylallyladenosine synthase from Geobacillus kaustophilus (strain HTA426).